Here is a 251-residue protein sequence, read N- to C-terminus: MSHFQVEDMLRAGVHFGHLARRWCPKMKPYIFMEKNGVHIIDLQKTAELANTALKALEAIAQTGREIMFVGTKKQAKVIIAEQATRSNMPYVSERWLGGMLTNFQTIRQSIRRMNSIDRMATDGTYDMITKKERLMLGREREKLMRILGGIATMNRLPAALFVVDIKKEHLAIKEARTLGIPVFAMVDTNCDPELVDYVIPANDDAIRSIQLMVKAVADTIINARELKVEQEVLATMDEAEVEGDKEDISE.

This sequence belongs to the universal ribosomal protein uS2 family.

The polypeptide is Small ribosomal subunit protein uS2 (Chlorobium chlorochromatii (strain CaD3)).